The following is a 603-amino-acid chain: Geraniol synthase Tps-5031G8, chloroplastic (603 aa).

The transit peptide at 1–35 (MCSISQKVVIGLNKAAANNCLQNLDRRGFKTRRVS) directs the protein to the chloroplast. Residues arginine 319, aspartate 356, aspartate 360, arginine 497, and aspartate 500 each coordinate (2E)-geranyl diphosphate. Positions 356 and 360 each coordinate Mg(2+). Residues 356-360 (DDVYD) carry the DDXXD motif motif. Residues aspartate 500, threonine 504, and glutamate 508 each contribute to the Mg(2+) site.

This sequence belongs to the terpene synthase family. Tpsb subfamily. As to quaternary structure, monomer. Mg(2+) serves as cofactor. Requires Mn(2+) as cofactor.

The protein resides in the plastid. The protein localises to the chloroplast. The enzyme catalyses (2E)-geranyl diphosphate + H2O = (2E)-geraniol + diphosphate. It participates in secondary metabolite biosynthesis; terpenoid biosynthesis. Its function is as follows. Monoterpene synthase (mono-TPS) involved in the biosynthesis of monoterpenes natural products. Catalyzes the conversion of (2E)-geranyl diphosphate (GPP) into geraniol. In Perilla frutescens var. hirtella (Perilla citriodora), this protein is Geraniol synthase Tps-5031G8, chloroplastic.